Consider the following 244-residue polypeptide: tRNA pseudouridine synthase A (244 aa).

Residue Asp52 is the Nucleophile of the active site. Tyr111 is a substrate binding site.

This sequence belongs to the tRNA pseudouridine synthase TruA family. As to quaternary structure, homodimer.

It carries out the reaction uridine(38/39/40) in tRNA = pseudouridine(38/39/40) in tRNA. Formation of pseudouridine at positions 38, 39 and 40 in the anticodon stem and loop of transfer RNAs. The sequence is that of tRNA pseudouridine synthase A from Thermosipho melanesiensis (strain DSM 12029 / CIP 104789 / BI429).